The sequence spans 429 residues: Glutamate-1-semialdehyde 2,1-aminomutase 2 (429 aa).

An N6-(pyridoxal phosphate)lysine modification is found at Lys268.

The protein belongs to the class-III pyridoxal-phosphate-dependent aminotransferase family. HemL subfamily. In terms of assembly, homodimer. Pyridoxal 5'-phosphate serves as cofactor.

It localises to the cytoplasm. It catalyses the reaction (S)-4-amino-5-oxopentanoate = 5-aminolevulinate. Its pathway is porphyrin-containing compound metabolism; protoporphyrin-IX biosynthesis; 5-aminolevulinate from L-glutamyl-tRNA(Glu): step 2/2. This Staphylococcus epidermidis (strain ATCC 35984 / DSM 28319 / BCRC 17069 / CCUG 31568 / BM 3577 / RP62A) protein is Glutamate-1-semialdehyde 2,1-aminomutase 2.